Here is an 86-residue protein sequence, read N- to C-terminus: Large ribosomal subunit protein eL43 (86 aa).

The C4-type zinc finger occupies 38-60; it reads CPFCGHKGKVYRLSTGVWACKKC.

It belongs to the eukaryotic ribosomal protein eL43 family. It depends on Zn(2+) as a cofactor.

In Desulfurococcus amylolyticus (strain DSM 18924 / JCM 16383 / VKM B-2413 / 1221n) (Desulfurococcus kamchatkensis), this protein is Large ribosomal subunit protein eL43.